A 176-amino-acid chain; its full sequence is Cell division protein ZapC (176 aa).

The protein belongs to the ZapC family. Interacts directly with FtsZ.

The protein localises to the cytoplasm. Its function is as follows. Contributes to the efficiency of the cell division process by stabilizing the polymeric form of the cell division protein FtsZ. Acts by promoting interactions between FtsZ protofilaments and suppressing the GTPase activity of FtsZ. The protein is Cell division protein ZapC of Pseudoalteromonas translucida (strain TAC 125).